A 94-amino-acid polypeptide reads, in one-letter code: Aspartyl/glutamyl-tRNA(Asn/Gln) amidotransferase subunit C (94 aa).

This sequence belongs to the GatC family. In terms of assembly, heterotrimer of A, B and C subunits.

It catalyses the reaction L-glutamyl-tRNA(Gln) + L-glutamine + ATP + H2O = L-glutaminyl-tRNA(Gln) + L-glutamate + ADP + phosphate + H(+). The catalysed reaction is L-aspartyl-tRNA(Asn) + L-glutamine + ATP + H2O = L-asparaginyl-tRNA(Asn) + L-glutamate + ADP + phosphate + 2 H(+). In terms of biological role, allows the formation of correctly charged Asn-tRNA(Asn) or Gln-tRNA(Gln) through the transamidation of misacylated Asp-tRNA(Asn) or Glu-tRNA(Gln) in organisms which lack either or both of asparaginyl-tRNA or glutaminyl-tRNA synthetases. The reaction takes place in the presence of glutamine and ATP through an activated phospho-Asp-tRNA(Asn) or phospho-Glu-tRNA(Gln). This is Aspartyl/glutamyl-tRNA(Asn/Gln) amidotransferase subunit C from Caldicellulosiruptor saccharolyticus (strain ATCC 43494 / DSM 8903 / Tp8T 6331).